The primary structure comprises 398 residues: Gastric triacylglycerol lipase (398 aa).

The first 19 residues, 1–19, serve as a signal peptide directing secretion; it reads MWLLLTMASLISVLGTTHG. N-linked (GlcNAc...) asparagine glycans are attached at residues Asn-34 and Asn-99. The region spanning 78-377 is the AB hydrolase-1 domain; sequence PVVFLQHGLL…PFYNHLDFIW (300 aa). Catalysis depends on Ser-172, which acts as the Nucleophile. Cys-246 and Cys-255 form a disulfide bridge. Asn-271 and Asn-327 each carry an N-linked (GlcNAc...) asparagine glycan. Active-site charge relay system residues include Asp-343 and His-372.

The protein belongs to the AB hydrolase superfamily. Lipase family.

It is found in the secreted. The catalysed reaction is a triacylglycerol + H2O = a diacylglycerol + a fatty acid + H(+). The enzyme catalyses 1,2,3-tri-(9Z-octadecenoyl)-glycerol + H2O = 1,2-di-(9Z-octadecenoyl)-sn-glycerol + (9Z)-octadecenoate + H(+). It catalyses the reaction 1,2,3-trioctanoylglycerol + H2O = 1,2-dioctanoyl-sn-glycerol + octanoate + H(+). Functionally, catalyzes the hydrolysis of triacylglycerols to yield free fatty acids, diacylglycerol, monoacylglycerol, and glycerol. Shows a preferential hydrolysis at the sn-3 position of triacylglycerol. This chain is Gastric triacylglycerol lipase (LIPF), found in Homo sapiens (Human).